The chain runs to 341 residues: uncharacterized protein (341 aa).

Residues 315–337 (VAAWFSGIAGGTFLALKLVSLMM) form a helical membrane-spanning segment.

It localises to the cell membrane. This is an uncharacterized protein from Bacillus subtilis (strain 168).